The chain runs to 99 residues: Cell division protein FtsB (99 aa).

Topologically, residues Met1 to Val3 are cytoplasmic. A helical transmembrane segment spans residues Phe4–Phe21. Over Gly22–Asn99 the chain is Periplasmic. Residues Tyr29–Leu53 are a coiled coil.

Belongs to the FtsB family. Part of a complex composed of FtsB, FtsL and FtsQ.

It is found in the cell inner membrane. In terms of biological role, essential cell division protein. May link together the upstream cell division proteins, which are predominantly cytoplasmic, with the downstream cell division proteins, which are predominantly periplasmic. This Colwellia psychrerythraea (strain 34H / ATCC BAA-681) (Vibrio psychroerythus) protein is Cell division protein FtsB.